A 159-amino-acid polypeptide reads, in one-letter code: Putative ribosomal RNA large subunit methyltransferase H (159 aa).

S-adenosyl-L-methionine is bound by residues leucine 76, glycine 108, and 127 to 132 (FSKMTF).

The protein belongs to the RNA methyltransferase RlmH family.

Its subcellular location is the cytoplasm. The catalysed reaction is pseudouridine(1915) in 23S rRNA + S-adenosyl-L-methionine = N(3)-methylpseudouridine(1915) in 23S rRNA + S-adenosyl-L-homocysteine + H(+). Its function is as follows. Specifically methylates the pseudouridine at position 1915 (m3Psi1915) in 23S rRNA. The protein is Putative ribosomal RNA large subunit methyltransferase H of Methanococcus maripaludis (strain DSM 14266 / JCM 13030 / NBRC 101832 / S2 / LL).